Here is a 307-residue protein sequence, read N- to C-terminus: Aspartate carbamoyltransferase catalytic subunit (307 aa).

Arginine 54 and threonine 55 together coordinate carbamoyl phosphate. An L-aspartate-binding site is contributed by lysine 83. Carbamoyl phosphate contacts are provided by arginine 104, histidine 132, and glutamine 135. L-aspartate is bound by residues arginine 165 and arginine 228. Positions 267 and 268 each coordinate carbamoyl phosphate.

This sequence belongs to the aspartate/ornithine carbamoyltransferase superfamily. ATCase family. In terms of assembly, heterododecamer (2C3:3R2) of six catalytic PyrB chains organized as two trimers (C3), and six regulatory PyrI chains organized as three dimers (R2).

The catalysed reaction is carbamoyl phosphate + L-aspartate = N-carbamoyl-L-aspartate + phosphate + H(+). It functions in the pathway pyrimidine metabolism; UMP biosynthesis via de novo pathway; (S)-dihydroorotate from bicarbonate: step 2/3. Catalyzes the condensation of carbamoyl phosphate and aspartate to form carbamoyl aspartate and inorganic phosphate, the committed step in the de novo pyrimidine nucleotide biosynthesis pathway. In Clostridium botulinum (strain Langeland / NCTC 10281 / Type F), this protein is Aspartate carbamoyltransferase catalytic subunit.